A 231-amino-acid polypeptide reads, in one-letter code: 5'-methylthioadenosine/S-adenosylhomocysteine nucleosidase (231 aa).

Catalysis depends on E12, which acts as the Proton acceptor. Substrate-binding positions include G78, V153, and 174–175 (ME). D198 acts as the Proton donor in catalysis.

It belongs to the PNP/UDP phosphorylase family. MtnN subfamily.

The catalysed reaction is S-adenosyl-L-homocysteine + H2O = S-(5-deoxy-D-ribos-5-yl)-L-homocysteine + adenine. It catalyses the reaction S-methyl-5'-thioadenosine + H2O = 5-(methylsulfanyl)-D-ribose + adenine. The enzyme catalyses 5'-deoxyadenosine + H2O = 5-deoxy-D-ribose + adenine. It functions in the pathway amino-acid biosynthesis; L-methionine biosynthesis via salvage pathway; S-methyl-5-thio-alpha-D-ribose 1-phosphate from S-methyl-5'-thioadenosine (hydrolase route): step 1/2. Catalyzes the irreversible cleavage of the glycosidic bond in both 5'-methylthioadenosine (MTA) and S-adenosylhomocysteine (SAH/AdoHcy) to adenine and the corresponding thioribose, 5'-methylthioribose and S-ribosylhomocysteine, respectively. Also cleaves 5'-deoxyadenosine, a toxic by-product of radical S-adenosylmethionine (SAM) enzymes, into 5-deoxyribose and adenine. The protein is 5'-methylthioadenosine/S-adenosylhomocysteine nucleosidase of Aliivibrio fischeri (Vibrio fischeri).